A 194-amino-acid polypeptide reads, in one-letter code: CASP-like protein 4D1 (194 aa).

At 1 to 10 the chain is on the cytoplasmic side; sequence MASRTVLLPS. Residues 11 to 31 form a helical membrane-spanning segment; sequence AVLILRLLSLGLLAASLALIA. At 32–55 the chain is on the extracellular side; it reads ADKLNVDSDPPQRYTFRDVYAYRY. A helical membrane pass occupies residues 56–76; it reads VLAVAVIGCAYTLLQLPLAAV. The Cytoplasmic portion of the chain corresponds to 77 to 94; that stretch reads SIIASGNNKRGIGAGGGS. A helical transmembrane segment spans residues 95-115; the sequence is VAVALLVLVLLADVVFALLLA. Over 116–161 the chain is Extracellular; it reads TGAAAGFAFTYDVKRYLDGQFDDDSIGTPEVDKLHRDMDKFFDLAY. Residues 162–182 form a helical membrane-spanning segment; it reads AAAGLMLAAAACMALVIMLSV. The Cytoplasmic portion of the chain corresponds to 183–194; it reads YSLARQVRSDYI.

The protein belongs to the Casparian strip membrane proteins (CASP) family. Homodimer and heterodimers.

The protein resides in the cell membrane. The polypeptide is CASP-like protein 4D1 (Sorghum bicolor (Sorghum)).